The chain runs to 107 residues: SH3 domain-binding glutamic acid-rich-like protein 2 (107 aa).

The SH3-binding motif lies at glutamine 61–proline 67.

The protein belongs to the SH3BGR family.

It localises to the nucleus. This Mus musculus (Mouse) protein is SH3 domain-binding glutamic acid-rich-like protein 2 (Sh3bgrl2).